A 554-amino-acid chain; its full sequence is MDFDEILHHVGDSGRFQICMIILLNILSLVLSPHDVLENFTAAIPAHHCSINLDNSRSEVSTDMNLTTEDLMKVSIPMGPNQKPEQCRRFRYTQWQFLDSNISTFNSTELETEPCLDGWTYDHSVFTSTIVTEWDLVCDFQSFKYYAQATSLAGHLVSCPLSGIISDRFGRKPLLMYCSLAYGAVGTYCAFAPNFSVYCVLRFLLSAFQSTILINSLILVLEEASVQWHPTIIVLSGLFNSIGQGVLGGLAYVISDWHLLQLAYALPFFIFFVLFCWVPESVRWLIITGKTDQAWKELQRIASINGKKGIAQNLTTEDLRSKLKKDVNSTGKLFRIKDIFINPLIRKIVLSNSSLLFAELFSFVGLLLDVQLLGKNMFLTQIFLGAIDVPSKSLTYFTIRNVSRRPLIAFLLLTTGSCITITIFISEEMYVLRTIIFILGKGCFAAFTCISTTYINELSPVELRSTLNGVFLAVVRLAGVLSALTLATRKYFVYLPMILYGVLPIVATISILFLPETFNLPHTDIIKDMEKRKRLMSKNISKKEGQDFLETTEC.

Residues 1–15 are Cytoplasmic-facing; sequence MDFDEILHHVGDSGR. Residues 16-36 form a helical membrane-spanning segment; it reads FQICMIILLNILSLVLSPHDV. The Extracellular segment spans residues 37–144; it reads LENFTAAIPA…DLVCDFQSFK (108 aa). Residue Asn39 is glycosylated (N-linked (GlcNAc...) asparagine). The helical transmembrane segment at 145 to 165 threads the bilayer; sequence YYAQATSLAGHLVSCPLSGII. Topologically, residues 166–172 are cytoplasmic; the sequence is SDRFGRK. The helical transmembrane segment at 173 to 193 threads the bilayer; the sequence is PLLMYCSLAYGAVGTYCAFAP. Asn194 carries an N-linked (GlcNAc...) asparagine glycan. At 194–199 the chain is on the extracellular side; sequence NFSVYC. A helical membrane pass occupies residues 200 to 220; the sequence is VLRFLLSAFQSTILINSLILV. Residues 221-231 are Cytoplasmic-facing; it reads LEEASVQWHPT. Residues 232-252 traverse the membrane as a helical segment; sequence IIVLSGLFNSIGQGVLGGLAY. Over 253-258 the chain is Extracellular; it reads VISDWH. Residues 259-279 form a helical membrane-spanning segment; that stretch reads LLQLAYALPFFIFFVLFCWVP. Residues 280 to 347 are Cytoplasmic-facing; the sequence is ESVRWLIITG…DIFINPLIRK (68 aa). Residues 348 to 368 traverse the membrane as a helical segment; that stretch reads IVLSNSSLLFAELFSFVGLLL. Residues 369-376 lie on the Extracellular side of the membrane; the sequence is DVQLLGKN. Residues 377-397 traverse the membrane as a helical segment; the sequence is MFLTQIFLGAIDVPSKSLTYF. Topologically, residues 398–405 are cytoplasmic; sequence TIRNVSRR. A helical transmembrane segment spans residues 406–426; sequence PLIAFLLLTTGSCITITIFIS. Residues 427–434 lie on the Extracellular side of the membrane; that stretch reads EEMYVLRT. The helical transmembrane segment at 435 to 455 threads the bilayer; sequence IIFILGKGCFAAFTCISTTYI. Residues 456–466 lie on the Cytoplasmic side of the membrane; it reads NELSPVELRST. A helical membrane pass occupies residues 467–487; that stretch reads LNGVFLAVVRLAGVLSALTLA. Residues 488–491 lie on the Extracellular side of the membrane; that stretch reads TRKY. A helical membrane pass occupies residues 492-512; the sequence is FVYLPMILYGVLPIVATISIL. The Cytoplasmic segment spans residues 513-554; it reads FLPETFNLPHTDIIKDMEKRKRLMSKNISKKEGQDFLETTEC.

This sequence belongs to the major facilitator (TC 2.A.1) superfamily. Organic cation transporter (TC 2.A.1.19) family. Specifically expressed in kidney where it is found in proximal convoluted tubules (at protein level). Colocalizes with the prostaglandin-inactivating enzyme HPGD in kidney (at protein level). Not detected in other tissues tested.

It localises to the basolateral cell membrane. In terms of biological role, sodium-independent organic anion transporter which exhibits high specificity for a subset of prostaglandins including prostaglandin E2 (PGE2), prostaglandin E1 (PGE1), prostaglandin F2-alpha (PGF2-alpha) and prostaglandin D2 (PGD2). This is Solute carrier family 22 member 22 from Mus musculus (Mouse).